The following is a 309-amino-acid chain: Calcium homeostasis modulator protein 5 (309 aa).

At Met-1 to Lys-15 the chain is on the cytoplasmic side. A helical membrane pass occupies residues Thr-16–Val-37. Arg-32 and Val-37 together coordinate a 1,2-diacyl-sn-glycero-3-phosphate. Residues Ala-38 to Val-45 lie on the Extracellular side of the membrane. Disulfide bonds link Cys-41-Cys-127, Cys-43-Cys-158, and Cys-142-Cys-149. Residues Glu-46–Asn-70 form a helical membrane-spanning segment. Residues Asn-71 to Val-99 lie on the Cytoplasmic side of the membrane. A helical membrane pass occupies residues Leu-100–Met-129. Asn-121 contacts a 1,2-diacyl-sn-glycero-3-phosphate. Topologically, residues Ser-130 to Ser-174 are extracellular. The chain crosses the membrane as a helical span at residues Leu-175–Tyr-200. The Cytoplasmic portion of the chain corresponds to Ala-201–Leu-309. Position 202 (Arg-202) interacts with a 1,2-diacyl-sn-glycero-3-phosphate.

Belongs to the CALHM family. In terms of assembly, oligomerizes to form undecameric cone-shaped channels.

The protein resides in the membrane. May assemble to form large pore channels with gating and ion conductance likely regulated by membrane lipids. This chain is Calcium homeostasis modulator protein 5, found in Mus musculus (Mouse).